A 214-amino-acid chain; its full sequence is MGRRPARCYRYCKNKPYPKSRFCRGVPDAKIRIFDLGRKKAKVDEFPLCGHMVSDEYEQLSSEALEAARICANKYMVKSCGKDGFHIRVRLHPFHVIRINKMLSCAGADRLQTGMRGAFGKPQGTVARVHIGQVIMSIRTKLQNKEHVIEALRRAKFKFPGRQKIHISKKWGFTKFNADEFEDMVAEKRLIPDGCGVKYTPNRGPLDKWRALHS.

Arg32 carries the post-translational modification Citrulline. Lys175 is covalently cross-linked (Glycyl lysine isopeptide (Lys-Gly) (interchain with G-Cter in SUMO2)). A Glycyl lysine isopeptide (Lys-Gly) (interchain with G-Cter in ubiquitin) cross-link involves residue Lys188.

The protein belongs to the universal ribosomal protein uL16 family. Component of the large ribosomal subunit. Mature ribosomes consist of a small (40S) and a large (60S) subunit. The 40S subunit contains about 33 different proteins and 1 molecule of RNA (18S). The 60S subunit contains about 49 different proteins and 3 molecules of RNA (28S, 5.8S and 5S). Citrullinated by PADI4. Post-translationally, ufmylated by UFL1.

The protein localises to the cytoplasm. Component of the large ribosomal subunit. Plays a role in the formation of actively translating ribosomes. May play a role in the embryonic brain development. This is Large ribosomal subunit protein uL16 from Pongo abelii (Sumatran orangutan).